The following is a 3174-amino-acid chain: Probable polyketide synthase 15 (3174 aa).

Residues 23–474 (NDEIAIVGIG…GSNCCLILSQ (452 aa)) form the Ketosynthase family 3 (KS3) domain. Catalysis depends on for beta-ketoacyl synthase activity residues Cys194, His342, and His397. Coiled-coil stretches lie at residues 472-509 (LSQFKNNENQQQQQQQQQQQQQQQQQQQQQRGQQQYDN) and 574-604 (EFNKQKQSQKEKEKEKEREGEEKEQLNRVQT). Basic and acidic residues predominate over residues 578–599 (QKQSQKEKEKEKEREGEEKEQL). The disordered stretch occupies residues 578–601 (QKQSQKEKEKEKEREGEEKEQLNR). The tract at residues 707-740 (GIEASFIVGHSLGEIPAAYCSGMITLDTLCYLIY) is acyl/malonyl transferase. Catalysis depends on Ser717, which acts as the For acyl/malonyl transferase activity. The N-terminal hotdog fold stretch occupies residues 1034–1156 (IDILGLSNYD…ANFQLLNNNN (123 aa)). The 299-residue stretch at 1034–1332 (IDILGLSNYD…CKSLKIVKNP (299 aa)) folds into the PKS/mFAS DH domain. Residue His1068 is the Proton acceptor; for dehydratase activity of the active site. Residues 1182 to 1332 (NKTKISRIDL…CKSLKIVKNP (151 aa)) form a C-terminal hotdog fold region. The active-site Proton donor; for dehydratase activity is Asp1241. The stretch at 1758–1793 (LEININNNNNNNNNNNNNNNNNNNNNNNNNNYEDNV) forms a coiled coil. The 78-residue stretch at 2653–2730 (VDSLNIKDIF…LVIKIIITAI (78 aa)) folds into the Carrier domain. The residue at position 2690 (Ser2690) is an O-(pantetheine 4'-phosphoryl)serine.

The cofactor is pantetheine 4'-phosphate.

In terms of biological role, probable polyketide synthase. This is Probable polyketide synthase 15 (pks15) from Dictyostelium discoideum (Social amoeba).